Consider the following 1309-residue polypeptide: Disease resistance protein RPP2A (1309 aa).

The TIR 1 domain occupies 9–173; sequence RRYDVFPSFS…MVADDVSKKL (165 aa). Residue glutamate 84 is part of the active site. Positions 187–418 constitute an NB-ARC 1 domain; the sequence is EAHLEAMSSI…FKKTLRNYLP (232 aa). The ALOG domain occupies 488 to 585; that stretch reads PNRRHSNDDW…KECILVFSCH (98 aa). The TIR 2 domain maps to 574–737; that stretch reads REKECILVFS…EVVRNASLRL (164 aa). Residues 755-987 form the NB-ARC 2 domain; sequence SQSTDVEIMG…IFLDLACFFR (233 aa). Positions 1114–1141 form a coiled coil; it reads LPHGLDTLPDELSLLHWENYPLVYLPQK. LRR repeat units follow at residues 1145–1167, 1168–1195, 1214–1237, 1238–1258, 1259–1283, and 1285–1307; these read VNLV…KKNL, EKLK…NLEH, CGKL…MVDL, TTLK…QDFA, PNLE…NLTE, and VTLD…EIIR.

This sequence belongs to the disease resistance TIR-NB-LRR family.

It catalyses the reaction NAD(+) + H2O = ADP-D-ribose + nicotinamide + H(+). Disease resistance protein that cooperates with RPP2B to confer resistance to Hyaloperonospora parasitica isolate Cala2. The chain is Disease resistance protein RPP2A from Arabidopsis thaliana (Mouse-ear cress).